Here is a 342-residue protein sequence, read N- to C-terminus: Tetraacyldisaccharide 4'-kinase (342 aa).

56-63 contacts ATP; sequence TAGGAGKT.

It belongs to the LpxK family.

It carries out the reaction a lipid A disaccharide + ATP = a lipid IVA + ADP + H(+). The protein operates within glycolipid biosynthesis; lipid IV(A) biosynthesis; lipid IV(A) from (3R)-3-hydroxytetradecanoyl-[acyl-carrier-protein] and UDP-N-acetyl-alpha-D-glucosamine: step 6/6. Functionally, transfers the gamma-phosphate of ATP to the 4'-position of a tetraacyldisaccharide 1-phosphate intermediate (termed DS-1-P) to form tetraacyldisaccharide 1,4'-bis-phosphate (lipid IVA). This Parvibaculum lavamentivorans (strain DS-1 / DSM 13023 / NCIMB 13966) protein is Tetraacyldisaccharide 4'-kinase.